A 265-amino-acid chain; its full sequence is Ribosomal RNA large subunit methyltransferase E (265 aa).

Positions 83, 85, 106, 122, and 146 each coordinate S-adenosyl-L-methionine. Lys-186 (proton acceptor) is an active-site residue. Positions 230–265 (KGREAGPPSGGSERPVDVSKDLSARSDSEGPGDAEG) are disordered. The span at 243-257 (RPVDVSKDLSARSDS) shows a compositional bias: basic and acidic residues.

This sequence belongs to the class I-like SAM-binding methyltransferase superfamily. RNA methyltransferase RlmE family.

It is found in the cytoplasm. It catalyses the reaction uridine(2552) in 23S rRNA + S-adenosyl-L-methionine = 2'-O-methyluridine(2552) in 23S rRNA + S-adenosyl-L-homocysteine + H(+). In terms of biological role, specifically methylates the uridine in position 2552 of 23S rRNA at the 2'-O position of the ribose in the fully assembled 50S ribosomal subunit. This Mesorhizobium japonicum (strain LMG 29417 / CECT 9101 / MAFF 303099) (Mesorhizobium loti (strain MAFF 303099)) protein is Ribosomal RNA large subunit methyltransferase E.